Here is a 154-residue protein sequence, read N- to C-terminus: 6,7-dimethyl-8-ribityllumazine synthase (154 aa).

Residues F23, 57–59 (AFE), and 81–83 (AVI) each bind 5-amino-6-(D-ribitylamino)uracil. 86 to 87 (AT) lines the (2S)-2-hydroxy-3-oxobutyl phosphate pocket. H89 serves as the catalytic Proton donor. F114 is a binding site for 5-amino-6-(D-ribitylamino)uracil. Residue R128 coordinates (2S)-2-hydroxy-3-oxobutyl phosphate.

The protein belongs to the DMRL synthase family.

The enzyme catalyses (2S)-2-hydroxy-3-oxobutyl phosphate + 5-amino-6-(D-ribitylamino)uracil = 6,7-dimethyl-8-(1-D-ribityl)lumazine + phosphate + 2 H2O + H(+). Its pathway is cofactor biosynthesis; riboflavin biosynthesis; riboflavin from 2-hydroxy-3-oxobutyl phosphate and 5-amino-6-(D-ribitylamino)uracil: step 1/2. In terms of biological role, catalyzes the formation of 6,7-dimethyl-8-ribityllumazine by condensation of 5-amino-6-(D-ribitylamino)uracil with 3,4-dihydroxy-2-butanone 4-phosphate. This is the penultimate step in the biosynthesis of riboflavin. In Syntrophus aciditrophicus (strain SB), this protein is 6,7-dimethyl-8-ribityllumazine synthase.